The following is a 276-amino-acid chain: MSITPHRLPVAPVIVREAYLSLLRKGWRPGDRDLKTPRNVKIETGIIEKAEGSALVKLGKTQVIAGVKAGVGAPFKDTPNQGVLTVHAEFVPLASPVFEPGPPDENAIELARVVDRSLREVGAVDLESLVIRPGEKVWVLWVDLYIIDHDGNLFDASMLATMAVLLTARLPRYEESETGEIIISKEGEGEELKVKTRVVTVTTAKIDRYIVVDPNIEEEAVSDVRLVTAVDENGRIVGLQKTGMGSLTEADIETMIGYSLEASKVYFKALEEAIKP.

It belongs to the RNase PH family. Rrp42 subfamily. In terms of assembly, component of the archaeal exosome complex. Forms a hexameric ring-like arrangement composed of 3 Rrp41-Rrp42 heterodimers. The hexameric ring associates with a trimer of Rrp4 and/or Csl4 subunits.

The protein localises to the cytoplasm. Functionally, non-catalytic component of the exosome, which is a complex involved in RNA degradation. Contributes to the structuring of the Rrp41 active site. The chain is Exosome complex component Rrp42 from Aeropyrum pernix (strain ATCC 700893 / DSM 11879 / JCM 9820 / NBRC 100138 / K1).